The chain runs to 652 residues: Acetyl-coenzyme A synthetase (652 aa).

Residues 189 to 192 (RGGK) and serine 311 each bind CoA. Residues 387-389 (GEP), 411-416 (DTWWQT), aspartate 500, and arginine 515 contribute to the ATP site. CoA is bound at residue serine 523. Residue arginine 526 coordinates ATP. Residues valine 537, histidine 539, and isoleucine 542 each contribute to the Mg(2+) site. Position 584 (lysine 584) interacts with CoA. Lysine 609 carries the post-translational modification N6-acetyllysine.

Belongs to the ATP-dependent AMP-binding enzyme family. It depends on Mg(2+) as a cofactor. In terms of processing, acetylated. Deacetylation by the SIR2-homolog deacetylase activates the enzyme.

It catalyses the reaction acetate + ATP + CoA = acetyl-CoA + AMP + diphosphate. In terms of biological role, catalyzes the conversion of acetate into acetyl-CoA (AcCoA), an essential intermediate at the junction of anabolic and catabolic pathways. AcsA undergoes a two-step reaction. In the first half reaction, AcsA combines acetate with ATP to form acetyl-adenylate (AcAMP) intermediate. In the second half reaction, it can then transfer the acetyl group from AcAMP to the sulfhydryl group of CoA, forming the product AcCoA. This chain is Acetyl-coenzyme A synthetase, found in Bartonella quintana (strain Toulouse) (Rochalimaea quintana).